The primary structure comprises 299 residues: 6-phosphogluconate dehydrogenase, NAD(+)-dependent, decarboxylating (299 aa).

NAD(+) is bound by residues 7–12 (GLGRMG), 67–69 (VPA), and Asn95. The substrate site is built by Asn95, Ser118, and Gly120. Lys169 functions as the Proton acceptor in the catalytic mechanism. A substrate-binding site is contributed by 172–173 (HN). The active-site Proton donor is Glu176. Substrate contacts are provided by Tyr177 and Arg268.

Belongs to the 6-phosphogluconate dehydrogenase family. In terms of assembly, homotetramer.

It catalyses the reaction 6-phospho-D-gluconate + NAD(+) = D-ribulose 5-phosphate + CO2 + NADH. It functions in the pathway carbohydrate degradation; pentose phosphate pathway. In terms of biological role, catalyzes the oxidative decarboxylation of 6-phosphogluconate to ribulose 5-phosphate and CO(2), with concomitant reduction of NAD to NADH. The protein is 6-phosphogluconate dehydrogenase, NAD(+)-dependent, decarboxylating of Haloferax volcanii (strain ATCC 29605 / DSM 3757 / JCM 8879 / NBRC 14742 / NCIMB 2012 / VKM B-1768 / DS2) (Halobacterium volcanii).